We begin with the raw amino-acid sequence, 417 residues long: NADH-quinone oxidoreductase subunit D (417 aa).

The protein belongs to the complex I 49 kDa subunit family. As to quaternary structure, NDH-1 is composed of 14 different subunits. Subunits NuoB, C, D, E, F, and G constitute the peripheral sector of the complex.

It localises to the cell inner membrane. It catalyses the reaction a quinone + NADH + 5 H(+)(in) = a quinol + NAD(+) + 4 H(+)(out). NDH-1 shuttles electrons from NADH, via FMN and iron-sulfur (Fe-S) centers, to quinones in the respiratory chain. The immediate electron acceptor for the enzyme in this species is believed to be ubiquinone. Couples the redox reaction to proton translocation (for every two electrons transferred, four hydrogen ions are translocated across the cytoplasmic membrane), and thus conserves the redox energy in a proton gradient. The sequence is that of NADH-quinone oxidoreductase subunit D from Chromobacterium violaceum (strain ATCC 12472 / DSM 30191 / JCM 1249 / CCUG 213 / NBRC 12614 / NCIMB 9131 / NCTC 9757 / MK).